A 1521-amino-acid polypeptide reads, in one-letter code: Retroelement silencing factor 1 (1521 aa).

Lysine 223 participates in a covalent cross-link: Glycyl lysine isopeptide (Lys-Gly) (interchain with G-Cter in SUMO2). Residues glutamate 621–lysine 640 form a disordered region. Serine 910 is subject to Phosphoserine. Phosphothreonine is present on threonine 996. Polar residues-rich tracts occupy residues lysine 1093–serine 1105 and leucine 1124–serine 1142. Disordered stretches follow at residues lysine 1093–lysine 1147, glutamate 1204–arginine 1230, and glutamate 1312–methionine 1335. Serine 1142 is subject to Phosphoserine. A compositionally biased stretch (low complexity) spans proline 1214–serine 1228. The segment covering glycine 1325–methionine 1335 has biased composition (basic and acidic residues). Lysine 1411 is covalently cross-linked (Glycyl lysine isopeptide (Lys-Gly) (interchain with G-Cter in SUMO2)). 2 disordered regions span residues aspartate 1425–serine 1444 and isoleucine 1457–glutamate 1485. Basic and acidic residues predominate over residues serine 1467 to leucine 1476. Phosphoserine occurs at positions 1482 and 1514.

Interacts with SETDB1.

The protein resides in the nucleus. Plays a role in the regulation of imprinted gene expression, regulates repressive epigenetic modifications associated with SETDB1. Required for the recruitment or accumulation of SETDB1 to the endogenous retroviruses (ERVs) and maintenance of repressive chromatin configuration, contributing to a subset of the SETDB1-dependent ERV silencing in embryonic stem cells. This Mus musculus (Mouse) protein is Retroelement silencing factor 1.